We begin with the raw amino-acid sequence, 117 residues long: Hydrogenase maturation factor HypA (117 aa).

His2 lines the Ni(2+) pocket. Cys73, Cys76, Cys92, and Cys95 together coordinate Zn(2+).

Belongs to the HypA/HybF family.

In terms of biological role, involved in the maturation of [NiFe] hydrogenases. Required for nickel insertion into the metal center of the hydrogenase. This is Hydrogenase maturation factor HypA from Solidesulfovibrio magneticus (strain ATCC 700980 / DSM 13731 / RS-1) (Desulfovibrio magneticus).